The following is a 25-amino-acid chain: Dermaseptin-5.2TR (25 aa).

Valine amide is present on Val-25.

In terms of tissue distribution, expressed by the skin glands.

The protein resides in the secreted. Functionally, has antimicrobial activity. The protein is Dermaseptin-5.2TR of Phyllomedusa trinitatis (Trinidad leaf frog).